Consider the following 452-residue polypeptide: Mitochondrial distribution and morphology protein 34 (452 aa).

Residues 1–196 (MSFRVKGWSD…LPSIIYKMSR (196 aa)) form the SMP-LTD domain.

It belongs to the MDM34 family. In terms of assembly, component of the ER-mitochondria encounter structure (ERMES) or MDM complex, composed of mmm1, mdm10, mdm12 and mdm34.

It localises to the mitochondrion outer membrane. Component of the ERMES/MDM complex, which serves as a molecular tether to connect the endoplasmic reticulum (ER) and mitochondria. Components of this complex are involved in the control of mitochondrial shape and protein biogenesis, and function in nonvesicular lipid trafficking between the ER and mitochondria. Mdm34 is required for the interaction of the ER-resident membrane protein mmm1 and the outer mitochondrial membrane-resident beta-barrel protein mdm10. The polypeptide is Mitochondrial distribution and morphology protein 34 (Schizosaccharomyces pombe (strain 972 / ATCC 24843) (Fission yeast)).